The chain runs to 122 residues: Large ribosomal subunit protein uL14 (122 aa).

This sequence belongs to the universal ribosomal protein uL14 family. Part of the 50S ribosomal subunit. Forms a cluster with proteins L3 and L19. In the 70S ribosome, L14 and L19 interact and together make contacts with the 16S rRNA in bridges B5 and B8.

In terms of biological role, binds to 23S rRNA. Forms part of two intersubunit bridges in the 70S ribosome. In Mycobacterium marinum (strain ATCC BAA-535 / M), this protein is Large ribosomal subunit protein uL14.